We begin with the raw amino-acid sequence, 623 residues long: Transketolase (623 aa).

An N-acetylmethionine modification is found at Met1. Ser3 bears the Phosphoserine mark. N6-acetyllysine occurs at positions 6 and 11. His37 is a binding site for substrate. Thiamine diphosphate-binding residues include Ser40 and His77. Ser104 is modified (phosphoserine). 123 to 125 (GSL) contacts thiamine diphosphate. Lys144 bears the N6-acetyllysine mark. Asp155 is a Mg(2+) binding site. Residues Gly156 and Asn185 each contribute to the thiamine diphosphate site. Mg(2+)-binding residues include Asn185 and Leu187. Residues Lys204, Lys232, and Lys241 each carry the N6-acetyllysine modification. Thiamine diphosphate contacts are provided by Lys244 and His258. Substrate is bound at residue His258. Lys260 carries the post-translational modification N6-acetyllysine. Phosphotyrosine is present on Tyr275. Residue Thr287 is modified to Phosphothreonine. The residue at position 295 (Ser295) is a Phosphoserine. 2 residues coordinate substrate: Arg318 and Ser345. At Ser345 the chain carries Phosphoserine. A Glycyl lysine isopeptide (Lys-Gly) (interchain with G-Cter in SUMO2) cross-link involves residue Lys352. Glu366 (proton donor) is an active-site residue. Position 392 (Phe392) interacts with thiamine diphosphate. Substrate contacts are provided by His416 and Asp424. Residue Gln428 coordinates thiamine diphosphate. Arg474 is a substrate binding site. N6-acetyllysine occurs at positions 538 and 603.

This sequence belongs to the transketolase family. Homodimer. Mg(2+) is required as a cofactor. Requires Ca(2+) as cofactor. It depends on Mn(2+) as a cofactor. The cofactor is Co(2+). Thiamine diphosphate serves as cofactor.

The catalysed reaction is D-sedoheptulose 7-phosphate + D-glyceraldehyde 3-phosphate = aldehydo-D-ribose 5-phosphate + D-xylulose 5-phosphate. Catalyzes the transfer of a two-carbon ketol group from a ketose donor to an aldose acceptor, via a covalent intermediate with the cofactor thiamine pyrophosphate. In Homo sapiens (Human), this protein is Transketolase (TKT).